Here is a 593-residue protein sequence, read N- to C-terminus: UvrABC system protein C (593 aa).

Residues methionine 17–isoleucine 94 enclose the GIY-YIG domain. In terms of domain architecture, UVR spans lysine 199 to leucine 234.

The protein belongs to the UvrC family. Interacts with UvrB in an incision complex.

It is found in the cytoplasm. Its function is as follows. The UvrABC repair system catalyzes the recognition and processing of DNA lesions. UvrC both incises the 5' and 3' sides of the lesion. The N-terminal half is responsible for the 3' incision and the C-terminal half is responsible for the 5' incision. The protein is UvrABC system protein C of Staphylococcus aureus (strain bovine RF122 / ET3-1).